The chain runs to 688 residues: Glycine--tRNA ligase beta subunit (688 aa).

This sequence belongs to the class-II aminoacyl-tRNA synthetase family. As to quaternary structure, tetramer of two alpha and two beta subunits.

Its subcellular location is the cytoplasm. It catalyses the reaction tRNA(Gly) + glycine + ATP = glycyl-tRNA(Gly) + AMP + diphosphate. The chain is Glycine--tRNA ligase beta subunit from Shewanella oneidensis (strain ATCC 700550 / JCM 31522 / CIP 106686 / LMG 19005 / NCIMB 14063 / MR-1).